We begin with the raw amino-acid sequence, 432 residues long: MASGMGPLKRLAAWFSDLRLAIVLLLLIALASAVGTGIPQGDPPSSYIDAYSDTPWLGLLHGEQVLQLQLDHVYSSGWFLALLAWLGLALILCSWRRQWPALMAARRWIDYRTTRQLSKLAIAESQPCPDTSQGLTQLETVLRASGWQVQRKPQRLAARRGAIGRVGPLLVHTGLVLLMLGAAWGALAGNRLERFLAPGRSLDLLDRDGTSQLTITLDRFAIDRDPAGRTEQFRSALKLQGPNQSLDAEISVNHPLRHRGITVYQADWSLATISLQIGRSPVLELPLQTYPELGDQIWGLVLPTRPDGTEPVFLSLESEQGPATVFDADGQQLARLRPGGPSAEVKGLPMRVDAVLPASGLLLKRDPGVPLVYLGFAVLLVGGGLSLVATRQLWAIAADGTLSVGGLCNRNLAAFATELPQLLQQVVVDQQG.

3 helical membrane passes run 18 to 38, 76 to 96, and 166 to 186; these read LRLA…GTGI, SGWF…CSWR, and VGPL…AWGA.

Belongs to the Ccs1/CcsB family. May interact with CcsA.

It localises to the cellular thylakoid membrane. Required during biogenesis of c-type cytochromes (cytochrome c6 and cytochrome f) at the step of heme attachment. This chain is Cytochrome c biogenesis protein CcsB, found in Synechococcus sp. (strain CC9605).